We begin with the raw amino-acid sequence, 343 residues long: Methionine import ATP-binding protein MetN (343 aa).

An ABC transporter domain is found at 2–241; the sequence is IKLSNITKVF…PKTPLAQKFI (240 aa). 38 to 45 contributes to the ATP binding site; sequence GASGAGKS.

Belongs to the ABC transporter superfamily. Methionine importer (TC 3.A.1.24) family. The complex is composed of two ATP-binding proteins (MetN), two transmembrane proteins (MetI) and a solute-binding protein (MetQ).

It localises to the cell inner membrane. The catalysed reaction is L-methionine(out) + ATP + H2O = L-methionine(in) + ADP + phosphate + H(+). The enzyme catalyses D-methionine(out) + ATP + H2O = D-methionine(in) + ADP + phosphate + H(+). Part of the ABC transporter complex MetNIQ involved in methionine import. Responsible for energy coupling to the transport system. The chain is Methionine import ATP-binding protein MetN from Shigella boydii serotype 4 (strain Sb227).